The sequence spans 316 residues: tRNA dimethylallyltransferase (316 aa).

Residue 17–24 (GPTASGKT) coordinates ATP. 19-24 (TASGKT) is a substrate binding site. 3 interaction with substrate tRNA regions span residues 42-45 (DSAL), 166-170 (QRLSR), and 247-252 (RCVGYR).

It belongs to the IPP transferase family. Monomer. The cofactor is Mg(2+).

It carries out the reaction adenosine(37) in tRNA + dimethylallyl diphosphate = N(6)-dimethylallyladenosine(37) in tRNA + diphosphate. Functionally, catalyzes the transfer of a dimethylallyl group onto the adenine at position 37 in tRNAs that read codons beginning with uridine, leading to the formation of N6-(dimethylallyl)adenosine (i(6)A). The protein is tRNA dimethylallyltransferase of Citrobacter koseri (strain ATCC BAA-895 / CDC 4225-83 / SGSC4696).